Consider the following 97-residue polypeptide: UPF0298 protein MGAS9429_Spy0329 (97 aa).

This sequence belongs to the UPF0298 family.

It localises to the cytoplasm. This Streptococcus pyogenes serotype M12 (strain MGAS9429) protein is UPF0298 protein MGAS9429_Spy0329.